The chain runs to 352 residues: Uroporphyrinogen decarboxylase (352 aa).

Residues 29–33, Phe48, Asp78, Tyr154, Ser209, and His322 each bind substrate; that span reads RQAGR.

Belongs to the uroporphyrinogen decarboxylase family. Homodimer.

It localises to the cytoplasm. The catalysed reaction is uroporphyrinogen III + 4 H(+) = coproporphyrinogen III + 4 CO2. It participates in porphyrin-containing compound metabolism; protoporphyrin-IX biosynthesis; coproporphyrinogen-III from 5-aminolevulinate: step 4/4. Catalyzes the decarboxylation of four acetate groups of uroporphyrinogen-III to yield coproporphyrinogen-III. The polypeptide is Uroporphyrinogen decarboxylase (Bacillus pumilus (strain SAFR-032)).